We begin with the raw amino-acid sequence, 614 residues long: Dihydroxy-acid dehydratase (614 aa).

D81 lines the Mg(2+) pocket. C122 serves as a coordination point for [2Fe-2S] cluster. 2 residues coordinate Mg(2+): D123 and K124. K124 is subject to N6-carboxylysine. C196 serves as a coordination point for [2Fe-2S] cluster. E492 is a Mg(2+) binding site. The active-site Proton acceptor is the S518.

The protein belongs to the IlvD/Edd family. As to quaternary structure, homodimer. It depends on [2Fe-2S] cluster as a cofactor. The cofactor is Mg(2+).

It catalyses the reaction (2R)-2,3-dihydroxy-3-methylbutanoate = 3-methyl-2-oxobutanoate + H2O. The enzyme catalyses (2R,3R)-2,3-dihydroxy-3-methylpentanoate = (S)-3-methyl-2-oxopentanoate + H2O. It participates in amino-acid biosynthesis; L-isoleucine biosynthesis; L-isoleucine from 2-oxobutanoate: step 3/4. Its pathway is amino-acid biosynthesis; L-valine biosynthesis; L-valine from pyruvate: step 3/4. In terms of biological role, functions in the biosynthesis of branched-chain amino acids. Catalyzes the dehydration of (2R,3R)-2,3-dihydroxy-3-methylpentanoate (2,3-dihydroxy-3-methylvalerate) into 2-oxo-3-methylpentanoate (2-oxo-3-methylvalerate) and of (2R)-2,3-dihydroxy-3-methylbutanoate (2,3-dihydroxyisovalerate) into 2-oxo-3-methylbutanoate (2-oxoisovalerate), the penultimate precursor to L-isoleucine and L-valine, respectively. The polypeptide is Dihydroxy-acid dehydratase (Ruegeria sp. (strain TM1040) (Silicibacter sp.)).